The sequence spans 450 residues: Phosphoglucosamine mutase (450 aa).

Catalysis depends on serine 102, which acts as the Phosphoserine intermediate. Mg(2+)-binding residues include serine 102, aspartate 243, aspartate 245, and aspartate 247. Residue serine 102 is modified to Phosphoserine.

This sequence belongs to the phosphohexose mutase family. Mg(2+) is required as a cofactor. Activated by phosphorylation.

The enzyme catalyses alpha-D-glucosamine 1-phosphate = D-glucosamine 6-phosphate. Its function is as follows. Catalyzes the conversion of glucosamine-6-phosphate to glucosamine-1-phosphate. The polypeptide is Phosphoglucosamine mutase (Agrobacterium fabrum (strain C58 / ATCC 33970) (Agrobacterium tumefaciens (strain C58))).